A 352-amino-acid chain; its full sequence is Molybdenum import ATP-binding protein ModC (352 aa).

The ABC transporter domain occupies 1 to 229; that stretch reads MLELNFSQTL…SVMNPWLPKE (229 aa). 31 to 38 serves as a coordination point for ATP; sequence GVSGAGKT. The Mop domain maps to 289 to 352; that stretch reads QTSIRNVLRA…AQIKSVSITA (64 aa).

The protein belongs to the ABC transporter superfamily. Molybdate importer (TC 3.A.1.8) family. As to quaternary structure, the complex is composed of two ATP-binding proteins (ModC), two transmembrane proteins (ModB) and a solute-binding protein (ModA).

Its subcellular location is the cell inner membrane. It carries out the reaction molybdate(out) + ATP + H2O = molybdate(in) + ADP + phosphate + H(+). Functionally, part of the ABC transporter complex ModABC involved in molybdenum import. Responsible for energy coupling to the transport system. This Escherichia coli O6:H1 (strain CFT073 / ATCC 700928 / UPEC) protein is Molybdenum import ATP-binding protein ModC.